The sequence spans 258 residues: MRLTPLPAFDNNYIWTLIAPDGRAIIVDPGQALPILEAHSKGLIPTAILLTHHHADHIGGVPELLERWPTLPVYAPHDTRIALNYHRIGEGDSLNILGLRFQVIHTPGHTHSHLTFIGNDLLFCGDTLFSLGCGQIFEGTPTQMLASLQRLAALPIQTRVCCGHEYTLSNAAFALHVDPTNTALQKRRQQANAMRLAGLPTLPISLESELNTNPFLRTAAPTIHAATATHLQRTPIDEVEVFATLRHWKNNFPIKNIP.

Zn(2+)-binding residues include H52, H54, D56, H57, H109, D126, and H164.

This sequence belongs to the metallo-beta-lactamase superfamily. Glyoxalase II family. In terms of assembly, monomer. It depends on Zn(2+) as a cofactor.

It catalyses the reaction an S-(2-hydroxyacyl)glutathione + H2O = a 2-hydroxy carboxylate + glutathione + H(+). Its pathway is secondary metabolite metabolism; methylglyoxal degradation; (R)-lactate from methylglyoxal: step 2/2. Functionally, thiolesterase that catalyzes the hydrolysis of S-D-lactoyl-glutathione to form glutathione and D-lactic acid. The chain is Hydroxyacylglutathione hydrolase from Xylella fastidiosa (strain M12).